A 364-amino-acid polypeptide reads, in one-letter code: Medium-wave-sensitive opsin 1 (364 aa).

The segment at 1 to 23 (MTQPWGPQMLAGGQPPESHEDST) is disordered. Residues 1-52 (MTQPWGPQMLAGGQPPESHEDSTQASIFTYTNSNSTRGPFEGPNFHIAPRWV) lie on the Extracellular side of the membrane. A required for 11-cis-retinal regeneration region spans residues 17–43 (ESHEDSTQASIFTYTNSNSTRGPFEGP). The N-linked (GlcNAc...) asparagine glycan is linked to N34. A helical transmembrane segment spans residues 53–77 (YHLTSAWMILVVIASVFTNGLVLVA). Residues 78-89 (TMRFKKLRHPLN) are Cytoplasmic-facing. Residues 90–115 (WILVNLAVADLAETVIASTISVVNQF) traverse the membrane as a helical segment. Residues 116–129 (YGYFVLGHPLCVVE) are Extracellular-facing. C126 and C203 are disulfide-bonded. A helical transmembrane segment spans residues 130 to 149 (GYTVSLCGITGLWSLAIISW). The Cytoplasmic portion of the chain corresponds to 150–168 (ERWLVVCKPFGNVRFDAKL). Residues 169 to 192 (AIAGIAFSWIWAAVWTAPPIFGWS) form a helical membrane-spanning segment. The Extracellular portion of the chain corresponds to 193 to 218 (RYWPYGLKTSCGPDVFSGTSYPGVQS). Residues 219-246 (YMMVLMVTCCIIPLSVIVLCYLQVWMAI) form a helical membrane-spanning segment. The Cytoplasmic segment spans residues 247 to 268 (RTVAKQQKESESTQKAEKEVTR). Residues 269–292 (MVVVMVFAYCLCWGPYTFFACFAT) traverse the membrane as a helical segment. The Extracellular segment spans residues 293–300 (AHPGYSFH). The chain crosses the membrane as a helical span at residues 301-325 (PLVAAIPSYFAKSATIYNPIIYVFM). K312 is modified (N6-(retinylidene)lysine). Residues 326-364 (NRQFRNCILQLFGKKVEDSSELSSASRTEASSVSSVSPA) are Cytoplasmic-facing.

The protein belongs to the G-protein coupled receptor 1 family. Opsin subfamily. In terms of assembly, monomer. Homodimer. Homotetramer. In terms of processing, O-glycosylated. Phosphorylated on some or all of the serine and threonine residues present in the C-terminal region. Expressed in cone photoreceptor cells.

The protein localises to the membrane. Its function is as follows. Visual pigments are the light-absorbing molecules that mediate vision. They consist of an apoprotein, opsin, covalently linked to cis-retinal. May increase spectral sensitivity in dim light. The chain is Medium-wave-sensitive opsin 1 (OPN1MW) from Oryctolagus cuniculus (Rabbit).